The primary structure comprises 116 residues: Putative RNase MJ0125 (116 aa).

Catalysis depends on residues Arg76 and His81. Residues 76–83 (RDKLIHQY) carry the RX(4)HXY motif motif. Tyr83 bears the O-di-AMP-tyrosine mark.

The protein belongs to the HepT RNase toxin family. Homodimer, probably forms a complex with cognate antitoxin MJ0126. Post-translationally, modified by cognate antitoxin MJ0126; probably at least 2 successive AMPylation events occur on Tyr-83.

Probable toxic component of a putative type VII toxin-antitoxin (TA) system, probably an RNase. Probably neutralized by cognate antitoxin MJ0126. Neutralization may be due to AMPylation by MJ0126. This Methanocaldococcus jannaschii (strain ATCC 43067 / DSM 2661 / JAL-1 / JCM 10045 / NBRC 100440) (Methanococcus jannaschii) protein is Putative RNase MJ0125.